A 177-amino-acid chain; its full sequence is Large ribosomal subunit protein uL6 (177 aa).

The protein belongs to the universal ribosomal protein uL6 family. As to quaternary structure, part of the 50S ribosomal subunit.

Functionally, this protein binds to the 23S rRNA, and is important in its secondary structure. It is located near the subunit interface in the base of the L7/L12 stalk, and near the tRNA binding site of the peptidyltransferase center. The protein is Large ribosomal subunit protein uL6 of Leptothrix cholodnii (strain ATCC 51168 / LMG 8142 / SP-6) (Leptothrix discophora (strain SP-6)).